The sequence spans 260 residues: NAD-capped RNA hydrolase NudC (260 aa).

Residue arginine 69 participates in substrate binding. 2 residues coordinate Zn(2+): cysteine 98 and cysteine 101. Glutamate 111 is a binding site for substrate. Residues cysteine 116 and cysteine 119 each coordinate Zn(2+). Residue tyrosine 124 participates in substrate binding. A Nudix hydrolase domain is found at 125–248; sequence PQIAPCIIVA…TVARRLIEDT (124 aa). 3 residues coordinate a divalent metal cation: alanine 158, glutamate 174, and glutamate 178. Positions 159-180 match the Nudix box motif; the sequence is GFVEVGETLEQTVVREVMEESQ. 192–199 lines the substrate pocket; sequence QPWPFPHS. An a divalent metal cation-binding site is contributed by glutamate 219. Alanine 241 provides a ligand contact to substrate.

This sequence belongs to the Nudix hydrolase family. NudC subfamily. Homodimer. Mg(2+) is required as a cofactor. The cofactor is Mn(2+). Requires Zn(2+) as cofactor.

The catalysed reaction is a 5'-end NAD(+)-phospho-ribonucleoside in mRNA + H2O = a 5'-end phospho-adenosine-phospho-ribonucleoside in mRNA + beta-nicotinamide D-ribonucleotide + 2 H(+). It carries out the reaction NAD(+) + H2O = beta-nicotinamide D-ribonucleotide + AMP + 2 H(+). It catalyses the reaction NADH + H2O = reduced beta-nicotinamide D-ribonucleotide + AMP + 2 H(+). Functionally, mRNA decapping enzyme that specifically removes the nicotinamide adenine dinucleotide (NAD) cap from a subset of mRNAs by hydrolyzing the diphosphate linkage to produce nicotinamide mononucleotide (NMN) and 5' monophosphate mRNA. The NAD-cap is present at the 5'-end of some mRNAs and stabilizes RNA against 5'-processing. Has preference for mRNAs with a 5'-end purine. Catalyzes the hydrolysis of a broad range of dinucleotide pyrophosphates. The sequence is that of NAD-capped RNA hydrolase NudC from Pectobacterium atrosepticum (strain SCRI 1043 / ATCC BAA-672) (Erwinia carotovora subsp. atroseptica).